The primary structure comprises 458 residues: GTPase Obg (458 aa).

The 157-residue stretch at 1 to 157 folds into the Obg domain; it reads MSFLDRVKIY…ITLYLELKVL (157 aa). The OBG-type G domain occupies 158-326; it reads ADLGLVGFPN…VLNEIVKVIS (169 aa). Residues 164 to 171, 189 to 193, 210 to 213, 280 to 283, and 307 to 309 contribute to the GTP site; these read GFPNAGKS, FTTLN, DIPG, NKAD, and SAA. Serine 171 and threonine 191 together coordinate Mg(2+). The 79-residue stretch at 341-419 folds into the OCT domain; sequence AVHGVEPLFK…VGQKEFEWSG (79 aa). The tract at residues 420 to 458 is disordered; the sequence is TELDSERAEQPDFEGYKRRTTQAERLEKRRQRRLKKEEK. The segment covering 423 to 446 has biased composition (basic and acidic residues); the sequence is DSERAEQPDFEGYKRRTTQAERLE. Over residues 447–458 the composition is skewed to basic residues; the sequence is KRRQRRLKKEEK.

The protein belongs to the TRAFAC class OBG-HflX-like GTPase superfamily. OBG GTPase family. As to quaternary structure, monomer. It depends on Mg(2+) as a cofactor.

The protein resides in the cytoplasm. Functionally, an essential GTPase which binds GTP, GDP and possibly (p)ppGpp with moderate affinity, with high nucleotide exchange rates and a fairly low GTP hydrolysis rate. Plays a role in control of the cell cycle, stress response, ribosome biogenesis and in those bacteria that undergo differentiation, in morphogenesis control. In Elusimicrobium minutum (strain Pei191), this protein is GTPase Obg.